The primary structure comprises 278 residues: 4-deoxy-L-threo-5-hexosulose-uronate ketol-isomerase (278 aa).

4 residues coordinate Zn(2+): His-196, His-198, Glu-203, and His-245.

This sequence belongs to the KduI family. Homohexamer. Requires Zn(2+) as cofactor.

It carries out the reaction 5-dehydro-4-deoxy-D-glucuronate = 3-deoxy-D-glycero-2,5-hexodiulosonate. It participates in glycan metabolism; pectin degradation; 2-dehydro-3-deoxy-D-gluconate from pectin: step 4/5. Functionally, catalyzes the isomerization of 5-dehydro-4-deoxy-D-glucuronate to 3-deoxy-D-glycero-2,5-hexodiulosonate. This chain is 4-deoxy-L-threo-5-hexosulose-uronate ketol-isomerase, found in Escherichia coli (strain K12 / MC4100 / BW2952).